Consider the following 402-residue polypeptide: Oxysterol-binding protein 8 (402 aa).

Residues 328–361 (DRIALEEGNLDVAAKEKHNLEEKQREDKRQRVAE) adopt a coiled-coil conformation.

This sequence belongs to the OSBP family.

This is Oxysterol-binding protein 8 (osbH) from Dictyostelium discoideum (Social amoeba).